A 134-amino-acid polypeptide reads, in one-letter code: UPF0216 protein AF_0460 (134 aa).

The protein belongs to the UPF0216 family.

The sequence is that of UPF0216 protein AF_0460 from Archaeoglobus fulgidus (strain ATCC 49558 / DSM 4304 / JCM 9628 / NBRC 100126 / VC-16).